The following is a 413-amino-acid chain: Bestrophin homolog 13 (413 aa).

4 consecutive transmembrane segments (helical) span residues 29–49 (LIYLILYYSVRVFYLKGIDLI), 72–92 (SYTRLIPLTFLLGFYVSNVVA), 236–256 (LVYTQVAALATYSFFFFTLFG), and 272–292 (LVVPVFTIVQFLFFVGWFKVG).

The protein belongs to the anion channel-forming bestrophin (TC 1.A.46) family. Calcium-sensitive chloride channel subfamily. Forms oligomers.

The protein localises to the cell membrane. In terms of biological role, forms chloride channels. In Caenorhabditis elegans, this protein is Bestrophin homolog 13 (best-13).